A 73-amino-acid polypeptide reads, in one-letter code: UPF0154 protein LJ_1506 (73 aa).

A helical transmembrane segment spans residues 3–23 (LGLAIFLIIIALLIGLVGGFY).

Belongs to the UPF0154 family.

The protein resides in the cell membrane. The polypeptide is UPF0154 protein LJ_1506 (Lactobacillus johnsonii (strain CNCM I-12250 / La1 / NCC 533)).